The following is a 216-amino-acid chain: Large ribosomal subunit protein uL3 (216 aa).

Over residues Gly133–Val145 the composition is skewed to polar residues. A disordered region spans residues Gly133–Gln153. Gln153 carries the N5-methylglutamine modification.

The protein belongs to the universal ribosomal protein uL3 family. In terms of assembly, part of the 50S ribosomal subunit. Forms a cluster with proteins L14 and L19. Methylated by PrmB.

One of the primary rRNA binding proteins, it binds directly near the 3'-end of the 23S rRNA, where it nucleates assembly of the 50S subunit. This Burkholderia cenocepacia (strain ATCC BAA-245 / DSM 16553 / LMG 16656 / NCTC 13227 / J2315 / CF5610) (Burkholderia cepacia (strain J2315)) protein is Large ribosomal subunit protein uL3.